The following is a 251-amino-acid chain: Ubiquinone/menaquinone biosynthesis C-methyltransferase UbiE (251 aa).

S-adenosyl-L-methionine is bound by residues threonine 74, aspartate 95, 123-124, and serine 140; that span reads NA.

The protein belongs to the class I-like SAM-binding methyltransferase superfamily. MenG/UbiE family.

It carries out the reaction a 2-demethylmenaquinol + S-adenosyl-L-methionine = a menaquinol + S-adenosyl-L-homocysteine + H(+). It catalyses the reaction a 2-methoxy-6-(all-trans-polyprenyl)benzene-1,4-diol + S-adenosyl-L-methionine = a 5-methoxy-2-methyl-3-(all-trans-polyprenyl)benzene-1,4-diol + S-adenosyl-L-homocysteine + H(+). It functions in the pathway quinol/quinone metabolism; menaquinone biosynthesis; menaquinol from 1,4-dihydroxy-2-naphthoate: step 2/2. It participates in cofactor biosynthesis; ubiquinone biosynthesis. Methyltransferase required for the conversion of demethylmenaquinol (DMKH2) to menaquinol (MKH2) and the conversion of 2-polyprenyl-6-methoxy-1,4-benzoquinol (DDMQH2) to 2-polyprenyl-3-methyl-6-methoxy-1,4-benzoquinol (DMQH2). This is Ubiquinone/menaquinone biosynthesis C-methyltransferase UbiE from Cronobacter sakazakii (strain ATCC BAA-894) (Enterobacter sakazakii).